We begin with the raw amino-acid sequence, 332 residues long: MKTLGEFIVEKQHEFSQATGELTALLSAIKLGAKIIHRDINKAGLVDILGASGAENVQGEVQQKLDLFANEKLKAALKARDIVAGIASEEEDEIVVFEGCEHAKYVVLMDPLDGSSNIDVNVSVGTIFSIYRRVTPVGTPVTEEDFLQPGNKQVAAGYVVYGSSTMLVYTTGCGVHAFTYDPSLGVFCLCQERMRFPEKGKTYSINEGNYIKFPNGVKKYIKFCQEEDSSTSRPYTSRYIGSLVADFHRNLLKGGIYLYPSTASHPQGKLRLLYECNPMAFLAEQAGGKASDGKERILDIIPESLHQRRSFFVGNRHMVEDVERFIREYPDA.

Mg(2+) contacts are provided by Glu-89, Asp-110, Leu-112, and Asp-113. Residues 113-116 (DGSS), Asn-206, Tyr-239, 257-259 (YLY), and Lys-269 each bind substrate. Glu-275 is a Mg(2+) binding site.

The protein belongs to the FBPase class 1 family. Homotetramer. It depends on Mg(2+) as a cofactor.

It is found in the cytoplasm. The enzyme catalyses beta-D-fructose 1,6-bisphosphate + H2O = beta-D-fructose 6-phosphate + phosphate. Its pathway is carbohydrate biosynthesis; gluconeogenesis. This is Fructose-1,6-bisphosphatase class 1 from Salmonella arizonae (strain ATCC BAA-731 / CDC346-86 / RSK2980).